Here is a 207-residue protein sequence, read N- to C-terminus: Ribosomal RNA small subunit methyltransferase G (207 aa).

S-adenosyl-L-methionine contacts are provided by residues Gly73, Leu78, 124-125 (VE), and Arg139.

Belongs to the methyltransferase superfamily. RNA methyltransferase RsmG family.

It localises to the cytoplasm. It carries out the reaction guanosine(527) in 16S rRNA + S-adenosyl-L-methionine = N(7)-methylguanosine(527) in 16S rRNA + S-adenosyl-L-homocysteine. Functionally, specifically methylates the N7 position of guanine in position 527 of 16S rRNA. This is Ribosomal RNA small subunit methyltransferase G from Escherichia coli (strain SMS-3-5 / SECEC).